The primary structure comprises 308 residues: Methionine synthase (308 aa).

Zn(2+) is bound by residues His201, Cys203, Glu224, and Cys285.

The protein belongs to the archaeal MetE family. Zn(2+) is required as a cofactor.

Its pathway is amino-acid biosynthesis; L-methionine biosynthesis via de novo pathway. Catalyzes the transfer of a methyl group to L-homocysteine resulting in methionine formation. Can use methylcobalamin and methylcobinamide as methyl donors, but methylcobalamin is not considered to be the physiological substrate. The chain is Methionine synthase from Methanothermobacter thermautotrophicus (strain ATCC 29096 / DSM 1053 / JCM 10044 / NBRC 100330 / Delta H) (Methanobacterium thermoautotrophicum).